Here is a 119-residue protein sequence, read N- to C-terminus: MARVKRAVNARKNHKKVLKLAKGYYGGKSKLFKTANESVIRALRNAYVGRRLKKRDYRRLWIARINAATRMNGLSYSRFMNGMKLAGVDINRKMLSEIAINDPKAFADLVELAKKHLNA.

It belongs to the bacterial ribosomal protein bL20 family.

In terms of biological role, binds directly to 23S ribosomal RNA and is necessary for the in vitro assembly process of the 50S ribosomal subunit. It is not involved in the protein synthesizing functions of that subunit. This is Large ribosomal subunit protein bL20 from Clostridium perfringens (strain ATCC 13124 / DSM 756 / JCM 1290 / NCIMB 6125 / NCTC 8237 / Type A).